We begin with the raw amino-acid sequence, 177 residues long: Large ribosomal subunit protein uL6 (177 aa).

It belongs to the universal ribosomal protein uL6 family. Part of the 50S ribosomal subunit.

Its function is as follows. This protein binds to the 23S rRNA, and is important in its secondary structure. It is located near the subunit interface in the base of the L7/L12 stalk, and near the tRNA binding site of the peptidyltransferase center. This is Large ribosomal subunit protein uL6 from Tolumonas auensis (strain DSM 9187 / NBRC 110442 / TA 4).